The sequence spans 133 residues: Putative biopolymer transport protein ExbD-like 2 (133 aa).

The Cytoplasmic portion of the chain corresponds to 1–9 (MKKVESMNV). A helical membrane pass occupies residues 10–30 (VPFIDIMLVLLVIVLTTASFV). The Periplasmic segment spans residues 31-133 (QTSKLPISIP…LVEDKKNQKN (103 aa)).

It belongs to the ExbD/TolR family.

The protein localises to the cell inner membrane. This is Putative biopolymer transport protein ExbD-like 2 from Helicobacter pylori (strain J99 / ATCC 700824) (Campylobacter pylori J99).